The sequence spans 283 residues: Formamidopyrimidine-DNA glycosylase (283 aa).

P2 functions as the Schiff-base intermediate with DNA in the catalytic mechanism. The active-site Proton donor is E3. Residue K58 is the Proton donor; for beta-elimination activity of the active site. Residues H100, R119, and R162 each coordinate DNA. The FPG-type zinc-finger motif lies at 247-283; that stretch reads RVYGREGLPCVTPGCSGTVGRIVQSGRSSFHCPLCQR. The active-site Proton donor; for delta-elimination activity is the R273.

This sequence belongs to the FPG family. Monomer. Zn(2+) serves as cofactor.

The catalysed reaction is Hydrolysis of DNA containing ring-opened 7-methylguanine residues, releasing 2,6-diamino-4-hydroxy-5-(N-methyl)formamidopyrimidine.. The enzyme catalyses 2'-deoxyribonucleotide-(2'-deoxyribose 5'-phosphate)-2'-deoxyribonucleotide-DNA = a 3'-end 2'-deoxyribonucleotide-(2,3-dehydro-2,3-deoxyribose 5'-phosphate)-DNA + a 5'-end 5'-phospho-2'-deoxyribonucleoside-DNA + H(+). Involved in base excision repair of DNA damaged by oxidation or by mutagenic agents. Acts as a DNA glycosylase that recognizes and removes damaged bases. Has a preference for oxidized purines, such as 7,8-dihydro-8-oxoguanine (8-oxoG). Has AP (apurinic/apyrimidinic) lyase activity and introduces nicks in the DNA strand. Cleaves the DNA backbone by beta-delta elimination to generate a single-strand break at the site of the removed base with both 3'- and 5'-phosphates. This Cereibacter sphaeroides (strain ATCC 17029 / ATH 2.4.9) (Rhodobacter sphaeroides) protein is Formamidopyrimidine-DNA glycosylase.